The chain runs to 497 residues: Cytochrome P450 2D19 (497 aa).

Cysteine 443 serves as a coordination point for heme.

Belongs to the cytochrome P450 family. Heme serves as cofactor.

It localises to the endoplasmic reticulum membrane. Its subcellular location is the microsome membrane. The catalysed reaction is an organic molecule + reduced [NADPH--hemoprotein reductase] + O2 = an alcohol + oxidized [NADPH--hemoprotein reductase] + H2O + H(+). Responsible for the metabolism of many drugs and environmental chemicals that it oxidizes. This chain is Cytochrome P450 2D19 (CYP2D19), found in Callithrix jacchus (White-tufted-ear marmoset).